We begin with the raw amino-acid sequence, 512 residues long: N-fatty-acyl-amino acid synthase/hydrolase PM20D1 (512 aa).

The first 34 residues, 1-34 (MAVSRWKAVGSTLLAAFLVGLVVLIAVLLIRTYT), serve as a signal peptide directing secretion. N-linked (GlcNAc...) asparagine glycans are attached at residues asparagine 45 and asparagine 81. Histidine 134 contacts Zn(2+). Aspartate 136 is an active-site residue. Aspartate 166 is a Zn(2+) binding site. The Proton acceptor role is filled by glutamate 200. Glutamate 201 and aspartate 227 together coordinate Zn(2+). Residue asparagine 450 is glycosylated (N-linked (GlcNAc...) asparagine). Residue histidine 472 coordinates Zn(2+).

It belongs to the peptidase M20A family.

The protein resides in the secreted. It catalyses the reaction an N-acyl-L-amino acid + H2O = an L-alpha-amino acid + a carboxylate. The catalysed reaction is an N-acyl-aromatic L-alpha-amino acid + H2O = an aromatic L-alpha-amino acid + a carboxylate. The enzyme catalyses N-(5Z,8Z,11Z,14Z)-eicosatetraenoyl-glycine + H2O = (5Z,8Z,11Z,14Z)-eicosatetraenoate + glycine. It carries out the reaction N-hexadecanoyl-L-phenylalanine + H2O = hexadecanoate + L-phenylalanine. It catalyses the reaction N-octadecanoyl-L-phenylalanine + H2O = octadecanoate + L-phenylalanine. The catalysed reaction is N-(4Z,7Z,10Z,13Z,16Z,19Z-docosahexaenoyl)-L-phenylalanine + H2O = (4Z,7Z,10Z,13Z,16Z,19Z)-docosahexaenoate + L-phenylalanine. The enzyme catalyses N-(9Z-octadecenoyl)-L-asparagine + H2O = L-asparagine + (9Z)-octadecenoate. It carries out the reaction (9Z)-octadecenoate + glycine = N-(9Z-octadecenoyl)glycine + H2O. It catalyses the reaction N-(9Z-octadecenoyl)-L-lysine + H2O = L-lysine + (9Z)-octadecenoate. The catalysed reaction is N-(9Z-octadecenoyl)-L-methionine + H2O = (9Z)-octadecenoate + L-methionine. The enzyme catalyses N-(9Z-octadecenoyl)-L-serine + H2O = L-serine + (9Z)-octadecenoate. It carries out the reaction N-(9Z-octadecenoyl)-L-tryptophan + H2O = L-tryptophan + (9Z)-octadecenoate. It catalyses the reaction N-(9Z-octadecenoyl)-L-tyrosine + H2O = L-tyrosine + (9Z)-octadecenoate. The catalysed reaction is N-(9Z-octadecenoyl)-L-glutamine + H2O = L-glutamine + (9Z)-octadecenoate. The enzyme catalyses N-(5Z,8Z,11Z,14Z-eicosatetraenoyl)-L-serine + H2O = (5Z,8Z,11Z,14Z)-eicosatetraenoate + L-serine. It carries out the reaction (5Z,8Z,11Z,14Z)-eicosatetraenoate + L-phenylalanine = N-(5Z,8Z,11Z,14Z-eicosatetraenoyl)-L-phenylalanine + H2O. It catalyses the reaction N-(9Z-octadecenoyl)-L-leucine + H2O = L-leucine + (9Z)-octadecenoate. The catalysed reaction is L-phenylalanine + (9Z)-octadecenoate = N-(9Z-octadecenoyl)-L-phenylalanine + H2O. It functions in the pathway amino-acid metabolism. The protein operates within energy metabolism; electron transfer. It participates in lipid metabolism; fatty acid metabolism. With respect to regulation, lipoproteins are powerful coactivators of PM20D1 activity in vitro and NAA biosynthesis in vivo. Its function is as follows. Secreted enzyme that regulates the endogenous N-fatty acyl amino acid (NAAs) tissue and circulating levels by functioning as a bidirectional NAA synthase/hydrolase. It condenses free fatty acids and free amino acids to generate NAAs and bidirectionally catalyzes the reverse hydrolysis reaction. Some of these NAAs stimulate oxidative metabolism via mitochondrial uncoupling, increasing energy expenditure in a UPC1-independent manner. Thereby, this secreted protein may indirectly regulate whole body energy expenditure. PM20D1 circulates in tight association with both low- and high-density (LDL and HDL,respectively) lipoprotein particles. The sequence is that of N-fatty-acyl-amino acid synthase/hydrolase PM20D1 from Xenopus tropicalis (Western clawed frog).